A 1670-amino-acid polypeptide reads, in one-letter code: Hemolymph clottable protein (1670 aa).

The first 14 residues, 1-14, serve as a signal peptide directing secretion; sequence MKALILLLLGACQA. Residues 15–674 form a vittelogenin region; sequence LQPGLEYQYR…FANFVTTTIY (660 aa). Residues 15-764 form the Vitellogenin domain; it reads LQPGLEYQYR…LKIDGQQRGL (750 aa). N-linked (GlcNAc...) asparagine glycosylation is present at Asn-106. The segment covering 198–231 has biased composition (low complexity); it reads SSYTTKTKSKTSSKTSSKTSSKTSSKTSKTGKTS. Residues 198 to 236 form a disordered region; sequence SSYTTKTKSKTSSKTSSKTSSKTSSKTSKTGKTSPGQLA. Asn-319, Asn-459, and Asn-1301 each carry an N-linked (GlcNAc...) asparagine glycan. Residues 1390–1550 form the VWFD domain; that stretch reads VSCTIDETKV…SWASPGEGCA (161 aa). 2 disulfides stabilise this stretch: Cys-1392/Cys-1513 and Cys-1414/Cys-1549.

In terms of assembly, homodimer; disulfide-linked. Also exists as oligomers. In terms of processing, glycosylated. Contains mannose and N-acetylglucosamine. Post-translationally, substrate of transglutaminase. As to expression, widely expressed with highest levels in gill and heart. Not expressed in hemocytes.

It localises to the secreted. In terms of biological role, forms stable clots in the presence of calcium. The protein is Hemolymph clottable protein of Penaeus monodon (Giant tiger prawn).